Reading from the N-terminus, the 109-residue chain is Prefoldin subunit 1 (109 aa).

S2 is subject to N-acetylserine.

This sequence belongs to the prefoldin subunit beta family. As to quaternary structure, heterohexamer of two PFD-alpha type and four PFD-beta type subunits.

Its subcellular location is the cytoplasm. In terms of biological role, binds specifically to cytosolic chaperonin (c-CPN) and transfers target proteins to it. Binds to nascent polypeptide chain and promotes folding in an environment in which there are many competing pathways for nonnative proteins. The sequence is that of Prefoldin subunit 1 (PFD1) from Saccharomyces cerevisiae (strain ATCC 204508 / S288c) (Baker's yeast).